The primary structure comprises 492 residues: Transmembrane protein 39B (492 aa).

Positions 1-53 (MGGRRGPNRTSYYRNPLCEPGSSGASGGGHSSSASVSSVRSRSRTTSGTGLSS) are disordered. An N-linked (GlcNAc...) asparagine glycan is attached at asparagine 8. Low complexity predominate over residues 31–53 (SSSASVSSVRSRSRTTSGTGLSS). The next 8 membrane-spanning stretches (helical) occupy residues 77–97 (SILF…VHYI), 115–135 (TSLN…IVLG), 153–175 (SLFR…GWSL), 185–205 (TYSF…IPFL), 288–308 (EVLV…VWFV), 322–342 (LFLL…LPAS), 421–441 (ILNI…YSLM), and 447–467 (HQTI…FKLL).

This sequence belongs to the TMEM39 family.

It localises to the endoplasmic reticulum membrane. In terms of biological role, may protect the cells against DNA damage caused by exposure to the cold-warming stress and facilitates tissue damage repair during the recovery phase. This is Transmembrane protein 39B from Mus musculus (Mouse).